Here is a 124-residue protein sequence, read N- to C-terminus: Large ribosomal subunit protein uL18 (124 aa).

It belongs to the universal ribosomal protein uL18 family. In terms of assembly, part of the 50S ribosomal subunit; part of the 5S rRNA/L5/L18/L25 subcomplex. Contacts the 5S and 23S rRNAs.

Functionally, this is one of the proteins that bind and probably mediate the attachment of the 5S RNA into the large ribosomal subunit, where it forms part of the central protuberance. This chain is Large ribosomal subunit protein uL18, found in Orientia tsutsugamushi (strain Boryong) (Rickettsia tsutsugamushi).